A 175-amino-acid polypeptide reads, in one-letter code: Adenine phosphoribosyltransferase (175 aa).

Belongs to the purine/pyrimidine phosphoribosyltransferase family. As to quaternary structure, homodimer.

Its subcellular location is the cytoplasm. The catalysed reaction is AMP + diphosphate = 5-phospho-alpha-D-ribose 1-diphosphate + adenine. It functions in the pathway purine metabolism; AMP biosynthesis via salvage pathway; AMP from adenine: step 1/1. In terms of biological role, catalyzes a salvage reaction resulting in the formation of AMP, that is energically less costly than de novo synthesis. This Lactobacillus delbrueckii subsp. bulgaricus (strain ATCC 11842 / DSM 20081 / BCRC 10696 / JCM 1002 / NBRC 13953 / NCIMB 11778 / NCTC 12712 / WDCM 00102 / Lb 14) protein is Adenine phosphoribosyltransferase.